The following is an 860-amino-acid chain: Alanine--tRNA ligase (860 aa).

Residues histidine 553, histidine 557, cysteine 655, and histidine 659 each contribute to the Zn(2+) site.

This sequence belongs to the class-II aminoacyl-tRNA synthetase family. Requires Zn(2+) as cofactor.

Its subcellular location is the cytoplasm. It catalyses the reaction tRNA(Ala) + L-alanine + ATP = L-alanyl-tRNA(Ala) + AMP + diphosphate. Catalyzes the attachment of alanine to tRNA(Ala) in a two-step reaction: alanine is first activated by ATP to form Ala-AMP and then transferred to the acceptor end of tRNA(Ala). Also edits incorrectly charged Ser-tRNA(Ala) and Gly-tRNA(Ala) via its editing domain. This chain is Alanine--tRNA ligase, found in Legionella pneumophila (strain Paris).